The chain runs to 60 residues: Small integral membrane protein 3 (60 aa).

A helical transmembrane segment spans residues 20–40 (IWVIVLIILATIVIMTSLLLC).

It is found in the membrane. The chain is Small integral membrane protein 3 (SMIM3) from Homo sapiens (Human).